A 256-amino-acid chain; its full sequence is 1-(5-phosphoribosyl)-5-[(5-phosphoribosylamino)methylideneamino] imidazole-4-carboxamide isomerase (256 aa).

Residue D8 is the Proton acceptor of the active site. The Proton donor role is filled by D130.

Belongs to the HisA/HisF family.

Its subcellular location is the cytoplasm. The catalysed reaction is 1-(5-phospho-beta-D-ribosyl)-5-[(5-phospho-beta-D-ribosylamino)methylideneamino]imidazole-4-carboxamide = 5-[(5-phospho-1-deoxy-D-ribulos-1-ylimino)methylamino]-1-(5-phospho-beta-D-ribosyl)imidazole-4-carboxamide. It participates in amino-acid biosynthesis; L-histidine biosynthesis; L-histidine from 5-phospho-alpha-D-ribose 1-diphosphate: step 4/9. The polypeptide is 1-(5-phosphoribosyl)-5-[(5-phosphoribosylamino)methylideneamino] imidazole-4-carboxamide isomerase (Chlorobium luteolum (strain DSM 273 / BCRC 81028 / 2530) (Pelodictyon luteolum)).